The following is a 532-amino-acid chain: Cytochrome P450 monooxygenase pgmC (532 aa).

Residues 15-32 traverse the membrane as a helical segment; sequence ISTLAVLIGFIALLTAWL. Heme is bound at residue Cys-438.

Belongs to the cytochrome P450 family. Heme serves as cofactor.

It is found in the membrane. It participates in pigment biosynthesis. The protein operates within secondary metabolite biosynthesis. Its function is as follows. Cytochrome P450 monooxygenase; part of the gene cluster that mediates the biosynthesis of pleosporalin A, ascomycone A, as well as a third cryptic naphthoquinone derived pigment, all responsible for the coloration of conidia. Involved in the oxidation of fusarubinaldehyde at C-9. PgmC has low substrate-specificity and is also able to use the pgmA product 3-acetonyl-1,6,8-trihydroxy-2-naphthaldehyde as a substrate. The pathway begins with the biosynthesis of the cyclized heptaketide 3-acetonyl-1,6,8-trihydroxy-2-naphthaldehyde by the NR-PKS pgmA. The C-6 hydroxyl group is further methylated by the O-methyltransferase pgmB to yield fusarubinaldehyde which is in turn oxidized by the cytochrome P450 monooxygenase pgmC at C-9. The C-1 hydroxyl group is then methylated spontaneously. Although pgmE, pgmD and pgmH are essential for the production of pleosporalin A, it is not the case for the 2 other final products and it remains difficult to assign a specific function to each enzyme. PgmF and pgmG seem not to be involved in pigment biosynthesis although they were regulated by the cluster-specific transcription factor pgmR. The chain is Cytochrome P450 monooxygenase pgmC from Aspergillus terreus (strain NIH 2624 / FGSC A1156).